The primary structure comprises 248 residues: Segregation and condensation protein A (248 aa).

The protein belongs to the ScpA family. In terms of assembly, component of a cohesin-like complex composed of ScpA, ScpB and the Smc homodimer, in which ScpA and ScpB bind to the head domain of Smc. The presence of the three proteins is required for the association of the complex with DNA.

It localises to the cytoplasm. Its function is as follows. Participates in chromosomal partition during cell division. May act via the formation of a condensin-like complex containing Smc and ScpB that pull DNA away from mid-cell into both cell halves. This Clostridium perfringens (strain SM101 / Type A) protein is Segregation and condensation protein A.